The chain runs to 379 residues: Glutamate 5-kinase (379 aa).

ATP is bound at residue Lys-17. Residues Ser-57, Asp-144, and Asn-156 each coordinate substrate. 176–177 (SD) is an ATP binding site. Positions 282–359 (SGILMIDQGA…EEIESILGYE (78 aa)) constitute a PUA domain.

It belongs to the glutamate 5-kinase family.

The protein resides in the cytoplasm. It catalyses the reaction L-glutamate + ATP = L-glutamyl 5-phosphate + ADP. It participates in amino-acid biosynthesis; L-proline biosynthesis; L-glutamate 5-semialdehyde from L-glutamate: step 1/2. Catalyzes the transfer of a phosphate group to glutamate to form L-glutamate 5-phosphate. This is Glutamate 5-kinase from Bartonella henselae (strain ATCC 49882 / DSM 28221 / CCUG 30454 / Houston 1) (Rochalimaea henselae).